We begin with the raw amino-acid sequence, 163 residues long: MAETKKMIILKSSDGESFEIEEAVAVKSQTIKHMIEDDCADNGIPLPNVTGAILAKVIEYCKKHVEAAAEAGGDKDFYGSAENDELKNWDSEFVKVDQPTLFDLILAANYLNIGGLLDLTCKAVADQMRGKTPEQMRAHFNIKNDYTPEEEAEVRNENKWAFE.

The interval 105-163 is interaction with the F-box domain of F-box proteins; it reads ILAANYLNIGGLLDLTCKAVADQMRGKTPEQMRAHFNIKNDYTPEEEAEVRNENKWAFE.

The protein belongs to the SKP1 family. Part of a SCF (SKP1-cullin-F-box) protein ligase complex. Interacts with At1g56610, At1g67340, At3g62230, At3g59000, At4g27050, At1g55000, SKIP16 and SKIP32. As to expression, mostly expressed in inflorescence and siliques, and, to a lower extent, in seedlings, roots, and stems.

It localises to the nucleus. It functions in the pathway protein modification; protein ubiquitination. Involved in ubiquitination and subsequent proteasomal degradation of target proteins. Together with CUL1, RBX1 and a F-box protein, it forms a SCF E3 ubiquitin ligase complex. The functional specificity of this complex depends on the type of F-box protein. In the SCF complex, it serves as an adapter that links the F-box protein to CUL1. The chain is SKP1-like protein 4 (ASK4) from Arabidopsis thaliana (Mouse-ear cress).